The primary structure comprises 359 residues: Ribosomal RNA large subunit methyltransferase M (359 aa).

S-adenosyl-L-methionine contacts are provided by residues serine 186, 219-222 (CPGG), aspartate 238, aspartate 258, and aspartate 275. Lysine 304 acts as the Proton acceptor in catalysis.

It belongs to the class I-like SAM-binding methyltransferase superfamily. RNA methyltransferase RlmE family. RlmM subfamily. Monomer.

Its subcellular location is the cytoplasm. It catalyses the reaction cytidine(2498) in 23S rRNA + S-adenosyl-L-methionine = 2'-O-methylcytidine(2498) in 23S rRNA + S-adenosyl-L-homocysteine + H(+). Functionally, catalyzes the 2'-O-methylation at nucleotide C2498 in 23S rRNA. The polypeptide is Ribosomal RNA large subunit methyltransferase M (Aliivibrio fischeri (strain MJ11) (Vibrio fischeri)).